The sequence spans 301 residues: Recombination-associated protein RdgC (301 aa).

It belongs to the RdgC family.

Its subcellular location is the cytoplasm. The protein resides in the nucleoid. Its function is as follows. May be involved in recombination. This is Recombination-associated protein RdgC from Pseudoalteromonas atlantica (strain T6c / ATCC BAA-1087).